The sequence spans 143 residues: Endoribonuclease YbeY (143 aa).

Zn(2+)-binding residues include His111, His115, and Asp121.

It belongs to the endoribonuclease YbeY family. Requires Zn(2+) as cofactor.

It localises to the cytoplasm. Functionally, single strand-specific metallo-endoribonuclease involved in late-stage 70S ribosome quality control and in maturation of the 3' terminus of the 16S rRNA. In Cytophaga hutchinsonii (strain ATCC 33406 / DSM 1761 / CIP 103989 / NBRC 15051 / NCIMB 9469 / D465), this protein is Endoribonuclease YbeY.